The sequence spans 395 residues: Zinc finger protein 385D (395 aa).

3 consecutive Matrin-type zinc fingers follow at residues 80–110 (ISCN…KLKA), 204–234 (LYCS…MLEA), and 267–297 (FHCE…RASG). The disordered stretch occupies residues 282–308 (LKQHISSRRHKDRASGKPPKPKYSPYN).

It is found in the nucleus. In Rattus norvegicus (Rat), this protein is Zinc finger protein 385D (Znf385d).